The chain runs to 110 residues: Large ribosomal subunit protein uL22 (110 aa).

This sequence belongs to the universal ribosomal protein uL22 family. Part of the 50S ribosomal subunit.

Its function is as follows. This protein binds specifically to 23S rRNA; its binding is stimulated by other ribosomal proteins, e.g. L4, L17, and L20. It is important during the early stages of 50S assembly. It makes multiple contacts with different domains of the 23S rRNA in the assembled 50S subunit and ribosome. The globular domain of the protein is located near the polypeptide exit tunnel on the outside of the subunit, while an extended beta-hairpin is found that lines the wall of the exit tunnel in the center of the 70S ribosome. This is Large ribosomal subunit protein uL22 from Pseudoalteromonas translucida (strain TAC 125).